The following is a 304-amino-acid chain: D-alanine--D-alanine ligase (304 aa).

The region spanning 103-299 is the ATP-grasp domain; the sequence is KLIWQALGLP…FADLCIEILK (197 aa). 129–184 provides a ligand contact to ATP; sequence EEKLGLPMFVKPAAEGSSVGVVKVKGKGRLKSVYEELKHFQGEIIAERFIGGGEYS. Positions 253, 266, and 268 each coordinate Mg(2+).

The protein belongs to the D-alanine--D-alanine ligase family. Mg(2+) serves as cofactor. It depends on Mn(2+) as a cofactor.

It is found in the cytoplasm. The catalysed reaction is 2 D-alanine + ATP = D-alanyl-D-alanine + ADP + phosphate + H(+). The protein operates within cell wall biogenesis; peptidoglycan biosynthesis. Functionally, cell wall formation. The chain is D-alanine--D-alanine ligase from Neisseria meningitidis serogroup A / serotype 4A (strain DSM 15465 / Z2491).